Consider the following 151-residue polypeptide: S-ribosylhomocysteine lyase (151 aa).

Fe cation is bound by residues H54, H58, and C121.

The protein belongs to the LuxS family. In terms of assembly, homodimer. Fe cation serves as cofactor.

The catalysed reaction is S-(5-deoxy-D-ribos-5-yl)-L-homocysteine = (S)-4,5-dihydroxypentane-2,3-dione + L-homocysteine. Involved in the synthesis of autoinducer 2 (AI-2) which is secreted by bacteria and is used to communicate both the cell density and the metabolic potential of the environment. The regulation of gene expression in response to changes in cell density is called quorum sensing. Catalyzes the transformation of S-ribosylhomocysteine (RHC) to homocysteine (HC) and 4,5-dihydroxy-2,3-pentadione (DPD). In Clostridioides difficile (strain 630) (Peptoclostridium difficile), this protein is S-ribosylhomocysteine lyase.